Here is a 492-residue protein sequence, read N- to C-terminus: Catalase (492 aa).

Catalysis depends on residues His-65 and Asn-138. Tyr-348 contributes to the heme binding site.

This sequence belongs to the catalase family. In terms of assembly, homotetramer. Heme serves as cofactor.

Its subcellular location is the cytoplasm. It localises to the cytosol. It is found in the peroxisome matrix. It catalyses the reaction 2 H2O2 = O2 + 2 H2O. Its function is as follows. Catalyzes the degradation of hydrogen peroxide (H(2)O(2)) generated by peroxisomal oxidases to water and oxygen, thereby protecting cells from the toxic effects of hydrogen peroxide. In Soldanella alpina (Alpine snowbell), this protein is Catalase.